Consider the following 283-residue polypeptide: E3 ubiquitin-protein ligase SGR9, amyloplastic (283 aa).

An amyloplast-targeting transit peptide spans methionine 1 to serine 32. The segment at cysteine 214 to arginine 255 adopts an RING-type; atypical zinc-finger fold.

Post-translationally, auto-ubiquitinated as part of the enzymatic reaction. In terms of tissue distribution, expressed in seedlings, hypocotyls, roots and stems. Present especially in hypocotyl and inflorescence endodermis, as well as in root cap columella, tissues that act as statocytes.

The protein localises to the plastid. It localises to the amyloplast. The enzyme catalyses S-ubiquitinyl-[E2 ubiquitin-conjugating enzyme]-L-cysteine + [acceptor protein]-L-lysine = [E2 ubiquitin-conjugating enzyme]-L-cysteine + N(6)-ubiquitinyl-[acceptor protein]-L-lysine.. It functions in the pathway protein modification; protein ubiquitination. Functionally, E3 ubiquitin-protein ligase which accepts ubiquitin from an E2 ubiquitin-conjugating enzyme in the form of a thioester and then directly transfers the ubiquitin to targeted substrates. Modulates amyloplast dynamics and sedimentation in statocytes during inflorescence, hypocotyl and root gravitropism, probably by regulating amyloplast interaction with actin filaments (AFs) in endodermal cells. The protein is E3 ubiquitin-protein ligase SGR9, amyloplastic (SGR9) of Arabidopsis thaliana (Mouse-ear cress).